The primary structure comprises 779 residues: Endonuclease MutS2 (779 aa).

328–335 (GPNTGGKT) lines the ATP pocket. One can recognise a Smr domain in the interval 704–779 (LDLRGKRYEE…GSGATIVTLG (76 aa)).

It belongs to the DNA mismatch repair MutS family. MutS2 subfamily. As to quaternary structure, homodimer. Binds to stalled ribosomes, contacting rRNA.

In terms of biological role, endonuclease that is involved in the suppression of homologous recombination and thus may have a key role in the control of bacterial genetic diversity. Acts as a ribosome collision sensor, splitting the ribosome into its 2 subunits. Detects stalled/collided 70S ribosomes which it binds and splits by an ATP-hydrolysis driven conformational change. Acts upstream of the ribosome quality control system (RQC), a ribosome-associated complex that mediates the extraction of incompletely synthesized nascent chains from stalled ribosomes and their subsequent degradation. Probably generates substrates for RQC. This chain is Endonuclease MutS2, found in Streptococcus agalactiae serotype III (strain NEM316).